The primary structure comprises 496 residues: Fibronectin type III and SPRY domain-containing protein 1 (496 aa).

Residues 4 to 99 are a coiled coil; the sequence is QREALRKIIK…ALESSEELLE (96 aa). Residues 105 to 162 enclose the COS domain; it reads LQAMDSEDFPQAAKQIKDGVTMAPAFRLSLKAKVSDNMSHLMVDFAQERQMLQALKFL. The region spanning 164–268 is the Fibronectin type-III domain; the sequence is VPSAPVIDLA…EPVTLETPAF (105 aa). The 210-residue stretch at 268–477 folds into the B30.2/SPRY domain; it reads FMFRLDASTS…VTTGLQVPSA (210 aa). The segment at 301 to 336 is disordered; sequence KAREKDGKGRTASPINSPARGTPSPKRMPSGRGGRD. Residues Arg-310 and Arg-320 each carry the omega-N-methylarginine modification.

In terms of assembly, oligomerization is required for binding to microtubules. As to expression, highly expressed in brain tissues, including cerebellum, cerebral cortex, medulla, occipital pole, frontal lobe, temporal lobe and putamen. Lower expression in spinal cord.

It is found in the cytoplasm. It localises to the cytoskeleton. The protein localises to the microtubule organizing center. The protein resides in the centrosome. Its subcellular location is the nucleus. It is found in the cleavage furrow. In terms of biological role, may be involved in microtubule organization and stabilization. This chain is Fibronectin type III and SPRY domain-containing protein 1 (FSD1), found in Homo sapiens (Human).